The following is a 172-amino-acid chain: Trypsin inhibitor 1B (172 aa).

2 disulfide bridges follow: Cys-40–Cys-84 and Cys-133–Cys-139.

It belongs to the protease inhibitor I3 (leguminous Kunitz-type inhibitor) family.

In terms of biological role, WTI-1B inhibits trypsin stoichiometrically. The sequence is that of Trypsin inhibitor 1B from Psophocarpus tetragonolobus (Winged bean).